A 319-amino-acid polypeptide reads, in one-letter code: Acetyl-coenzyme A carboxylase carboxyl transferase subunit alpha (319 aa).

Positions 35–296 (NIDEEVHRLR…KAQLLADLAD (262 aa)) constitute a CoA carboxyltransferase C-terminal domain.

It belongs to the AccA family. Acetyl-CoA carboxylase is a heterohexamer composed of biotin carboxyl carrier protein (AccB), biotin carboxylase (AccC) and two subunits each of ACCase subunit alpha (AccA) and ACCase subunit beta (AccD).

Its subcellular location is the cytoplasm. The enzyme catalyses N(6)-carboxybiotinyl-L-lysyl-[protein] + acetyl-CoA = N(6)-biotinyl-L-lysyl-[protein] + malonyl-CoA. The protein operates within lipid metabolism; malonyl-CoA biosynthesis; malonyl-CoA from acetyl-CoA: step 1/1. Component of the acetyl coenzyme A carboxylase (ACC) complex. First, biotin carboxylase catalyzes the carboxylation of biotin on its carrier protein (BCCP) and then the CO(2) group is transferred by the carboxyltransferase to acetyl-CoA to form malonyl-CoA. The sequence is that of Acetyl-coenzyme A carboxylase carboxyl transferase subunit alpha from Escherichia coli O139:H28 (strain E24377A / ETEC).